Reading from the N-terminus, the 352-residue chain is Carbohydrate sulfotransferase 11 (352 aa).

Residues 1 to 16 (MKPALLEVMRMNRICR) lie on the Cytoplasmic side of the membrane. A helical; Signal-anchor for type II membrane protein transmembrane segment spans residues 17-37 (MVLATCLGSFILVIFYFQSML). Topologically, residues 38–352 (HPVMRRNPFG…YSVPNYLKLD (315 aa)) are lumenal. 3'-phosphoadenylyl sulfate is bound by residues 124-130 (PKVACTN) and 186-194 (REPFERLVS). Residues Asn205, Asn223, Asn321, and Asn342 are each glycosylated (N-linked (GlcNAc...) asparagine).

This sequence belongs to the sulfotransferase 2 family. Post-translationally, N-glycosylated; required for activity and stability.

Its subcellular location is the golgi apparatus membrane. The catalysed reaction is chondroitin beta-D-glucuronate + n 3'-phosphoadenylyl sulfate = chondroitin 4'-sulfate + n adenosine 3',5'-bisphosphate + n H(+). In terms of biological role, catalyzes the transfer of sulfate to position 4 of the N-acetylgalactosamine (GalNAc) residue of chondroitin. Chondroitin sulfate constitutes the predominant proteoglycan present in cartilage and is distributed on the surfaces of many cells and extracellular matrices. Can also sulfate Gal residues in desulfated dermatan sulfate. Preferentially sulfates in GlcA-&gt;GalNAc unit than in IdoA-&gt;GalNAc unit. Does not form 4, 6-di-O-sulfated GalNAc when chondroitin sulfate C is used as an acceptor. The protein is Carbohydrate sulfotransferase 11 (Chst11) of Rattus norvegicus (Rat).